Here is a 422-residue protein sequence, read N- to C-terminus: Beta-1,3-galactosyltransferase 2 (422 aa).

Topologically, residues 1 to 24 (MLQWRRRHCCFAKMTWNAKRSLFR) are cytoplasmic. Residues 25–45 (THLIGVLSLVFLFAMFLFFNH) form a helical; Signal-anchor for type II membrane protein membrane-spanning segment. At 46–422 (HDWLPGRAGF…AGRYRHRKLH (377 aa)) the chain is on the lumenal side. N-linked (GlcNAc...) asparagine glycosylation is found at asparagine 75, asparagine 100, asparagine 119, asparagine 176, and asparagine 226. Positions 90–110 (TLRPQTATNSNNTDLSPQGVT) are disordered.

The protein belongs to the glycosyltransferase 31 family. Mn(2+) serves as cofactor.

Its subcellular location is the golgi apparatus membrane. It carries out the reaction an N-acetyl-beta-D-glucosaminyl derivative + UDP-alpha-D-galactose = a beta-D-galactosyl-(1-&gt;3)-N-acetyl-beta-D-glucosaminyl derivative + UDP + H(+). The enzyme catalyses a beta-D-GlcNAc-(1-&gt;3)-beta-D-Gal-(1-&gt;4)-beta-D-Glc-(1&lt;-&gt;1)-Cer(d18:1(4E)) + UDP-alpha-D-galactose = a beta-D-Gal-(1-&gt;3)-beta-D-GlcNAc-(1-&gt;3)-beta-D-Gal-(1-&gt;4)-beta-D-Glc-(1&lt;-&gt;1')-Cer(d18:1(4E)) + UDP + H(+). The catalysed reaction is a neolactoside IV(3)-beta-GlcNAc-nLc4Cer(d18:1(4E)) + UDP-alpha-D-galactose = a neolactoside IV(3)-beta-[Gal-beta-(1-&gt;3)-GlcNAc]-nLc4Cer(d18:1(4E)) + UDP + H(+). It functions in the pathway protein modification; protein glycosylation. In terms of biological role, beta-1,3-galactosyltransferase that transfers galactose from UDP-galactose to substrates with a terminal beta-N-acetylglucosamine (beta-GlcNAc) residue. Can also utilize substrates with a terminal galactose residue, albeit with lower efficiency. Involved in the biosynthesis of the carbohydrate moieties of glycolipids and glycoproteins. Inactive towards substrates with terminal alpha-N-acetylglucosamine (alpha-GlcNAc) or alpha-N-acetylgalactosamine (alpha-GalNAc) residues. The polypeptide is Beta-1,3-galactosyltransferase 2 (B3GALT2) (Pongo abelii (Sumatran orangutan)).